A 269-amino-acid chain; its full sequence is Hydroxyethylthiazole kinase (269 aa).

Met46 provides a ligand contact to substrate. ATP is bound by residues Arg122 and Thr168. Residue Gly195 participates in substrate binding.

This sequence belongs to the Thz kinase family. It depends on Mg(2+) as a cofactor.

The enzyme catalyses 5-(2-hydroxyethyl)-4-methylthiazole + ATP = 4-methyl-5-(2-phosphooxyethyl)-thiazole + ADP + H(+). It functions in the pathway cofactor biosynthesis; thiamine diphosphate biosynthesis; 4-methyl-5-(2-phosphoethyl)-thiazole from 5-(2-hydroxyethyl)-4-methylthiazole: step 1/1. Functionally, catalyzes the phosphorylation of the hydroxyl group of 4-methyl-5-beta-hydroxyethylthiazole (THZ). This is Hydroxyethylthiazole kinase from Geobacillus thermodenitrificans (strain NG80-2).